Reading from the N-terminus, the 348-residue chain is Ferredoxin--NADP reductase 1 (348 aa).

Residues Asp-33, Lys-41, Tyr-45, Val-85, Leu-120, Asp-287, and Ser-328 each coordinate FAD.

The protein belongs to the ferredoxin--NADP reductase type 2 family. In terms of assembly, homodimer. FAD is required as a cofactor.

The enzyme catalyses 2 reduced [2Fe-2S]-[ferredoxin] + NADP(+) + H(+) = 2 oxidized [2Fe-2S]-[ferredoxin] + NADPH. This is Ferredoxin--NADP reductase 1 from Oceanobacillus iheyensis (strain DSM 14371 / CIP 107618 / JCM 11309 / KCTC 3954 / HTE831).